The chain runs to 228 residues: 2,3-bisphosphoglycerate-dependent phosphoglycerate mutase (228 aa).

Residues 8–15, 21–22, Arg60, 87–90, Lys98, 114–115, and 180–181 each bind substrate; these read RHGQSQWN, TG, ERHY, RR, and GN. The Tele-phosphohistidine intermediate role is filled by His9. The active-site Proton donor/acceptor is the Glu87.

This sequence belongs to the phosphoglycerate mutase family. BPG-dependent PGAM subfamily. As to quaternary structure, homodimer.

It catalyses the reaction (2R)-2-phosphoglycerate = (2R)-3-phosphoglycerate. It functions in the pathway carbohydrate degradation; glycolysis; pyruvate from D-glyceraldehyde 3-phosphate: step 3/5. In terms of biological role, catalyzes the interconversion of 2-phosphoglycerate and 3-phosphoglycerate. This is 2,3-bisphosphoglycerate-dependent phosphoglycerate mutase from Novosphingobium aromaticivorans (strain ATCC 700278 / DSM 12444 / CCUG 56034 / CIP 105152 / NBRC 16084 / F199).